A 307-amino-acid chain; its full sequence is MQEAYVNINSIPTHIFTWGRWIEETITEKEIVICITGNPGLPGFYTEFAGTLQKELGDLPVWVIGHAGHDDPPEASIREVPQLSGNEELFNLDGQIRHKIAFIEKYVPSDVKIHLIGHSIGAWMILQLLENERIRSRIQKCYMLFPTVERMMESPNGWVFTKVAMPLYSVFGYIFFSFFNFLPVWLRLMLIQIYFLIFSIPRQFLGTALKYSKPSVAEKVVFLADDEMARVRGIQREIVEQNLDLLKFYYGTTDGWVPISYYDQLKKDYPKVDAQLDTKKIDHAFVLRHSQPMAVIVRDMIQQHRRV.

Ser119 (nucleophile) is an active-site residue. Residues 157 to 200 are potential amphipathic helix required for binding to lipid droplets; the sequence is GWVFTKVAMPLYSVFGYIFFSFFNFLPVWLRLMLIQIYFLIFSI. Transmembrane regions (helical) follow at residues 166 to 186 and 188 to 208; these read PLYS…PVWL and LMLI…LGTA. Catalysis depends on charge relay system residues Asp254 and His283.

This sequence belongs to the AB hydrolase superfamily. LDAH family. Interacts with the juvenile hormone hydrolase enzymes Jheh1 and Jheh2. Also interacts with Hmu, Cpr, Gp93 and Pvr. Expressed in accessory glands.

It is found in the lipid droplet. It localises to the endoplasmic reticulum membrane. The enzyme catalyses a cholesterol ester + H2O = cholesterol + a fatty acid + H(+). In terms of biological role, probable serine lipid hydrolase associated with lipid droplets. Appears to lack or have very low cholesterol esterase activity. Appears to lack triglyceride lipase activity. Involved in cholesterol and triglyceride homeostasis; stimulates cellular triglyceride accumulation and cellular cholesterol release. Involved in negatively regulating juvenile hormone (JH) and possibly, insulin signaling activities such as triacylglycerols (TAG) storage, and thereby plays a role in the endocrine regulation of organismal growth and survival. Likely functions by enhancing the activity of the JH hydrolase enzymes Jheh1 and Jheh2. Required for lipid droplet positioning and fat storage. This Drosophila melanogaster (Fruit fly) protein is Lipid droplet-associated hydrolase.